A 424-amino-acid chain; its full sequence is MKPQWQQYIQIINQVVKPALGCTEPIAAAYAAAVARTLLNDDPDSIAVQVSDNLYKNSMGVYVPGTGKIGLAIAAAAGALAGNADAGLEVLASVTPEQVAQAQALIDAAKVKVERTETDEFIYCCVTLTSGEQEAMVKICGGHTLIAEKRLNGELVFTADNAQAKATGSICDGVDINIESIYRFAEEVPFEEIQFILKASELNSKLSDEGMSKPYGLEVGRTMKNGIAAGIIGEDLLNKIVMLTAAASDARMGGANLPAMSNLGSGNQGIAATIPVVITAQCYKVSEEKLARALIMSHLGAIYIKSHYPPLSAFCGNTVTSAAASMAMVYLAGGSFEQSCFAIQNVISDSSGMVCDGAKASCAMKVSTSSSAAVRSFLMALSSQNVSGQGIIANHVEKTIKNIGKMVLNGMSSTDVTIINIMSE.

Belongs to the UPF0597 family.

The chain is UPF0597 protein SO_1403 from Shewanella oneidensis (strain ATCC 700550 / JCM 31522 / CIP 106686 / LMG 19005 / NCIMB 14063 / MR-1).